The chain runs to 1383 residues: NPC intracellular cholesterol transporter 1 homolog 1 (1383 aa).

A signal peptide spans 1-20 (MKQLLIFCLLFGSIFHHGDA). Intrachain disulfides connect Cys22/Cys76, Cys28/Cys39, Cys65/Cys111, Cys77/Cys115, Cys99/Cys246, Cys102/Cys167, Cys182/Cys187, and Cys235/Cys251. N-linked (GlcNAc...) asparagine glycosylation is present at Asn42. An N-linked (GlcNAc...) asparagine glycan is attached at Asn231. The next 2 membrane-spanning stretches (helical) occupy residues 282–302 (IFVM…GFVF) and 353–373 (PKSH…GMIY). Asn447 is a glycosylation site (N-linked (GlcNAc...) asparagine). Intrachain disulfides connect Cys464–Cys474 and Cys526–Cys541. N-linked (GlcNAc...) asparagine glycosylation occurs at Asn558. A run of 6 helical transmembrane segments spans residues 627 to 647 (EIVT…FSLG), 665 to 685 (ICLG…SWGI), 697 to 717 (ALVV…FMVV), 746 to 766 (TMPA…IGGF), 780 to 800 (GLAV…LFVW), and 856 to 876 (IITG…SSKI). The SSD domain occupies 627-800 (EIVTVVIALA…CTIFLALFVW (174 aa)). Intrachain disulfides connect Cys929-Cys934, Cys976-Cys1046, Cys977-Cys1005, and Cys988-Cys1002. Asn993 and Asn1082 each carry an N-linked (GlcNAc...) asparagine glycan. A run of 5 helical transmembrane segments spans residues 1126 to 1146 (IMPI…GIIC), 1157 to 1177 (ACAV…MYIF), 1179 to 1199 (IPVN…LIEF), 1226 to 1246 (IGPI…MFLS), and 1260 to 1280 (LFLI…PILL).

It belongs to the patched family.

It localises to the membrane. The enzyme catalyses cholesterol(in) = cholesterol(out). In terms of biological role, involved in the uptake or utilization of cholesterol. Ncr-1 and ncr-2 act redundantly to prevent dauer larva formation under favorable growth conditions, and are required for the normal functioning of ADF, ASI and ASG neurons. This chain is NPC intracellular cholesterol transporter 1 homolog 1, found in Caenorhabditis elegans.